We begin with the raw amino-acid sequence, 116 residues long: Nascent polypeptide-associated complex protein (116 aa).

Residues Pro-6–Lys-70 enclose the NAC-A/B domain.

The protein belongs to the NAC-alpha family. Homodimer. Interacts with the ribosome. Binds ribosomal RNA.

In terms of biological role, contacts the emerging nascent chain on the ribosome. The sequence is that of Nascent polypeptide-associated complex protein from Sulfolobus acidocaldarius (strain ATCC 33909 / DSM 639 / JCM 8929 / NBRC 15157 / NCIMB 11770).